The primary structure comprises 361 residues: Peptide chain release factor 1 (361 aa).

Gln237 bears the N5-methylglutamine mark. Positions 286–296 are enriched in basic and acidic residues; that stretch reads EKRRSAEESTR. Residues 286–305 form a disordered region; it reads EKRRSAEESTRRNLVSSGDR.

This sequence belongs to the prokaryotic/mitochondrial release factor family. Methylated by PrmC. Methylation increases the termination efficiency of RF1.

The protein resides in the cytoplasm. Peptide chain release factor 1 directs the termination of translation in response to the peptide chain termination codons UAG and UAA. The sequence is that of Peptide chain release factor 1 from Shewanella pealeana (strain ATCC 700345 / ANG-SQ1).